We begin with the raw amino-acid sequence, 304 residues long: MLDVCLLGTSGMMPLPGRWLTALMTRLNGSSLLIDCGEGTQIAIREKGWSFHSIDIICFTHYHGDHISGLPGLLLSMGNADRTQPVTVIGPKGLERVVSALRVIAPELPFELNFIEVTNPQETICVNDYVINAFRVNHNVICYGYTIEVKRTGRFIPEMAMQNEVPIELWSRLQKGQTIEKDSRVFTPDMILGPQRKGIKLTYCTDSRPVPQIIEQAQGSDLFICEGMYGEKEKQSNAIENKHMTFYEAAELAKQAGVKELWLTHYSPSLTRPEEYMKETKEIFPNAKAGKDRKSITLEFDKNE.

Residues His61, His63, Asp65, His66, His138, Asp206, and His265 each coordinate Zn(2+). Asp65 serves as the catalytic Proton acceptor.

Belongs to the RNase Z family. As to quaternary structure, homodimer. Zn(2+) serves as cofactor.

It catalyses the reaction Endonucleolytic cleavage of RNA, removing extra 3' nucleotides from tRNA precursor, generating 3' termini of tRNAs. A 3'-hydroxy group is left at the tRNA terminus and a 5'-phosphoryl group is left at the trailer molecule.. Functionally, zinc phosphodiesterase, which displays some tRNA 3'-processing endonuclease activity. Probably involved in tRNA maturation, by removing a 3'-trailer from precursor tRNA. The protein is Ribonuclease Z of Lachnoclostridium phytofermentans (strain ATCC 700394 / DSM 18823 / ISDg) (Clostridium phytofermentans).